A 406-amino-acid polypeptide reads, in one-letter code: Purine nucleoside permease (406 aa).

The signal sequence occupies residues 1–22; it reads MKLSTLFTLATTISTLTTFTIA.

The protein belongs to the NUP family. Post-translationally, predicted to be a substrate for cleavage by KEX2.

Mammalian nucleoside transport inhibitors dipyridamole and NBMPR inhibit adenosine transport by NUP. In terms of biological role, nucleoside permease that transports adenosine and guanosine. Does not show any transport activities towards cytidine, adenine, guanine, uridine, and uracil. The polypeptide is Purine nucleoside permease (Candida albicans (strain SC5314 / ATCC MYA-2876) (Yeast)).